The primary structure comprises 480 residues: Protein nucleotidyltransferase YdiU (480 aa).

ATP contacts are provided by glycine 84, glycine 86, arginine 87, lysine 107, aspartate 119, glycine 120, arginine 170, and arginine 177. Aspartate 246 acts as the Proton acceptor in catalysis. Mg(2+) contacts are provided by asparagine 247 and aspartate 256. Residue aspartate 256 participates in ATP binding.

Belongs to the SELO family. Mg(2+) is required as a cofactor. It depends on Mn(2+) as a cofactor.

It catalyses the reaction L-seryl-[protein] + ATP = 3-O-(5'-adenylyl)-L-seryl-[protein] + diphosphate. The catalysed reaction is L-threonyl-[protein] + ATP = 3-O-(5'-adenylyl)-L-threonyl-[protein] + diphosphate. The enzyme catalyses L-tyrosyl-[protein] + ATP = O-(5'-adenylyl)-L-tyrosyl-[protein] + diphosphate. It carries out the reaction L-histidyl-[protein] + UTP = N(tele)-(5'-uridylyl)-L-histidyl-[protein] + diphosphate. It catalyses the reaction L-seryl-[protein] + UTP = O-(5'-uridylyl)-L-seryl-[protein] + diphosphate. The catalysed reaction is L-tyrosyl-[protein] + UTP = O-(5'-uridylyl)-L-tyrosyl-[protein] + diphosphate. In terms of biological role, nucleotidyltransferase involved in the post-translational modification of proteins. It can catalyze the addition of adenosine monophosphate (AMP) or uridine monophosphate (UMP) to a protein, resulting in modifications known as AMPylation and UMPylation. In Pseudoalteromonas atlantica (strain T6c / ATCC BAA-1087), this protein is Protein nucleotidyltransferase YdiU.